A 163-amino-acid chain; its full sequence is ADP-ribosylation factor-like protein 2-binding protein (163 aa).

It belongs to the ARL2BP family. In terms of assembly, interacts with GTP bound ARL2 and ARL3; the complex ARL2-ARL2BP as well as ARL2BP alone, binds to SLC25A4/ANT1. Interaction with ARL2 may be required for targeting to cilia basal body. Interacts with STAT3; interaction is enhanced with ARL2. Found in a complex with ARL2, ARL2BP and SLC25A4. Interacts with STAT2, STAT3 and STAT4. Found in a complex with ARL2BP, ARL2 and SLC25A6. Expressed in brain.

It localises to the cytoplasm. The protein resides in the mitochondrion intermembrane space. The protein localises to the cytoskeleton. It is found in the microtubule organizing center. Its subcellular location is the centrosome. It localises to the nucleus. The protein resides in the spindle. The protein localises to the cilium basal body. Its function is as follows. Together with ARL2, plays a role in the nuclear translocation, retention and transcriptional activity of STAT3. May play a role as an effector of ARL2. The polypeptide is ADP-ribosylation factor-like protein 2-binding protein (ARL2BP) (Bos taurus (Bovine)).